Here is a 192-residue protein sequence, read N- to C-terminus: uncharacterized protein (192 aa).

This sequence to A.aeolicus AQ_054.

This is an uncharacterized protein from Thermotoga maritima (strain ATCC 43589 / DSM 3109 / JCM 10099 / NBRC 100826 / MSB8).